The sequence spans 110 residues: MFGGKGGLGNLMKQAQQMQEKMQKMQEEIAQLEVTGESGAGLVKVTINGAHNCRRVEIDPSLLEDDKEMLEDLVAAAFNDAARRIEETQKEKMASVSSGMQLPPGFKMPF.

A disordered region spans residues 89 to 110 (QKEKMASVSSGMQLPPGFKMPF).

This sequence belongs to the YbaB/EbfC family. In terms of assembly, homodimer.

The protein resides in the cytoplasm. It is found in the nucleoid. Binds to DNA and alters its conformation. May be involved in regulation of gene expression, nucleoid organization and DNA protection. This is Nucleoid-associated protein ESA_02800 from Cronobacter sakazakii (strain ATCC BAA-894) (Enterobacter sakazakii).